The following is a 271-amino-acid chain: Formamidopyrimidine-DNA glycosylase (271 aa).

Catalysis depends on proline 2, which acts as the Schiff-base intermediate with DNA. The Proton donor role is filled by glutamate 3. Lysine 57 acts as the Proton donor; for beta-elimination activity in catalysis. DNA is bound by residues histidine 90, arginine 109, and lysine 151. The segment at histidine 236–threonine 270 adopts an FPG-type zinc-finger fold. Arginine 260 functions as the Proton donor; for delta-elimination activity in the catalytic mechanism.

It belongs to the FPG family. Monomer. Requires Zn(2+) as cofactor.

It carries out the reaction Hydrolysis of DNA containing ring-opened 7-methylguanine residues, releasing 2,6-diamino-4-hydroxy-5-(N-methyl)formamidopyrimidine.. It catalyses the reaction 2'-deoxyribonucleotide-(2'-deoxyribose 5'-phosphate)-2'-deoxyribonucleotide-DNA = a 3'-end 2'-deoxyribonucleotide-(2,3-dehydro-2,3-deoxyribose 5'-phosphate)-DNA + a 5'-end 5'-phospho-2'-deoxyribonucleoside-DNA + H(+). Its function is as follows. Involved in base excision repair of DNA damaged by oxidation or by mutagenic agents. Acts as a DNA glycosylase that recognizes and removes damaged bases. Has a preference for oxidized purines, such as 7,8-dihydro-8-oxoguanine (8-oxoG). Has AP (apurinic/apyrimidinic) lyase activity and introduces nicks in the DNA strand. Cleaves the DNA backbone by beta-delta elimination to generate a single-strand break at the site of the removed base with both 3'- and 5'-phosphates. In Shewanella amazonensis (strain ATCC BAA-1098 / SB2B), this protein is Formamidopyrimidine-DNA glycosylase.